Consider the following 148-residue polypeptide: Large ribosomal subunit protein bL9 (148 aa).

It belongs to the bacterial ribosomal protein bL9 family.

Binds to the 23S rRNA. The sequence is that of Large ribosomal subunit protein bL9 from Pseudomonas putida (strain GB-1).